The primary structure comprises 469 residues: E3 ubiquitin-protein ligase TRIM21 (469 aa).

The RING-type zinc-finger motif lies at 16-55 (CSICLDPMVEPMSIECGHSFCQECISEVGKEGGSVCPVCR). The B box-type zinc-finger motif lies at 87 to 128 (PHGELCVVHREKIHLFCEEDGKALCWVCSQSQKHRDHPMVPI). The Zn(2+) site is built by Cys-92, His-95, Cys-114, and His-120. Positions 128-245 (IEEAAQEYQE…RRGSALELLQ (118 aa)) form a coiled coil. A Phosphoserine modification is found at Ser-266. In terms of domain architecture, B30.2/SPRY spans 268 to 467 (DLRNVFYVPG…APLILCPLKT (200 aa)).

This sequence belongs to the TRIM/RBCC family. Homotrimer. Interacts (via C-terminus) with IRF8 (via C-terminus). Component of a SCF(SKP2)-like complex containing CUL1, SKP1, TRIM21 and SKP2. Interacts with CALR, CUL1, FBXW11, HSPA5, IKBKB, IRF3, SKP1 and VCP. Interacts with SKP2; the interaction with SKP2 does not depend on an intact F-box domain. Interacts (via N-terminus and C-terminus) with DCP2 (via N-terminus and C-terminus). Interacts with ULK1, BECN1 and with ATG8 family members, including GABARAP, GABARAPL1, GABARAPL2 and MAP1LC3C/LC3C. Interacts with TRIM21 and SQSTM1/sequestosome 1. Interacts with IRF3. Interacts (via the SPRY domain) with NMI (via coiled-coil domain); the interaction promotes 'Lys-63'-linked ubiquitination of NMI. Interacts with IFI35 and NMI; the interaction facilitates NMI-IFI35 complex formation. Post-translationally, autoubiquitinated; does not lead to its proteasomal degradation. Deubiquitinated by USP4; leading to its stabilization.

Its subcellular location is the cytoplasm. The protein localises to the cytoplasmic vesicle. The protein resides in the autophagosome. It is found in the nucleus. It localises to the P-body. Its subcellular location is the stress granule. It carries out the reaction S-ubiquitinyl-[E2 ubiquitin-conjugating enzyme]-L-cysteine + [acceptor protein]-L-lysine = [E2 ubiquitin-conjugating enzyme]-L-cysteine + N(6)-ubiquitinyl-[acceptor protein]-L-lysine.. Its pathway is protein modification; protein ubiquitination. Its function is as follows. E3 ubiquitin-protein ligase whose activity is dependent on E2 enzymes, UBE2D1, UBE2D2, UBE2E1 and UBE2E2. Forms a ubiquitin ligase complex in cooperation with the E2 UBE2D2 that is used not only for the ubiquitination of USP4 and IKBKB but also for its self-ubiquitination. Component of cullin-RING-based SCF (SKP1-CUL1-F-box protein) E3 ubiquitin-protein ligase complexes such as SCF(SKP2)-like complexes. A TRIM21-containing SCF(SKP2)-like complex is shown to mediate ubiquitination of CDKN1B ('Thr-187' phosphorylated-form), thereby promoting its degradation by the proteasome. Monoubiquitinates IKBKB that will negatively regulates Tax-induced NF-kappa-B signaling. Negatively regulates IFN-beta production post-pathogen recognition by catalyzing polyubiquitin-mediated degradation of IRF3. Mediates the ubiquitin-mediated proteasomal degradation of IgG1 heavy chain, which is linked to the VCP-mediated ER-associated degradation (ERAD) pathway. Promotes IRF8 ubiquitination, which enhanced the ability of IRF8 to stimulate cytokine genes transcription in macrophages. Plays a role in the regulation of the cell cycle progression. Enhances the decapping activity of DCP2. Exists as a ribonucleoprotein particle present in all mammalian cells studied and composed of a single polypeptide and one of four small RNA molecules. At least two isoforms are present in nucleated and red blood cells, and tissue specific differences in RO/SSA proteins have been identified. The common feature of these proteins is their ability to bind HY RNAs.2. Involved in the regulation of innate immunity and the inflammatory response in response to IFNG/IFN-gamma. Organizes autophagic machinery by serving as a platform for the assembly of ULK1, Beclin 1/BECN1 and ATG8 family members and recognizes specific autophagy targets, thus coordinating target recognition with assembly of the autophagic apparatus and initiation of autophagy. Also regulates autophagy through FIP200/RB1CC1 ubiquitination and subsequent decreased protein stability. Represses the innate antiviral response by facilitating the formation of the NMI-IFI35 complex through 'Lys-63'-linked ubiquitination of NMI. During viral infection, promotes cell pyroptosis by mediating 'Lys-6'-linked ubiquitination of ISG12a/IFI27, facilitating its translocation into the mitochondria and subsequent CASP3 activation. When up-regulated through the IFN/JAK/STAT signaling pathway, promotes 'Lys-27'-linked ubiquitination of MAVS, leading to the recruitment of TBK1 and up-regulation of innate immunity. Mediates 'Lys-63'-linked polyubiquitination of G3BP1 in response to heat shock, leading to stress granule disassembly. The chain is E3 ubiquitin-protein ligase TRIM21 (TRIM21) from Bos taurus (Bovine).